The following is a 634-amino-acid chain: Leucine--tRNA ligase subunit alpha (634 aa).

Residues 43-51 carry the 'HIGH' region motif; sequence PSGRIHMGH.

It belongs to the class-I aminoacyl-tRNA synthetase family. Seems to consist of an alpha chain and a beta chain.

The protein resides in the cytoplasm. It carries out the reaction tRNA(Leu) + L-leucine + ATP = L-leucyl-tRNA(Leu) + AMP + diphosphate. In Aquifex aeolicus (strain VF5), this protein is Leucine--tRNA ligase subunit alpha (leuS).